Consider the following 166-residue polypeptide: Large ribosomal subunit protein uL10 (166 aa).

The protein belongs to the universal ribosomal protein uL10 family. As to quaternary structure, part of the ribosomal stalk of the 50S ribosomal subunit. The N-terminus interacts with L11 and the large rRNA to form the base of the stalk. The C-terminus forms an elongated spine to which L12 dimers bind in a sequential fashion forming a multimeric L10(L12)X complex.

Functionally, forms part of the ribosomal stalk, playing a central role in the interaction of the ribosome with GTP-bound translation factors. The protein is Large ribosomal subunit protein uL10 of Pelagibacter ubique (strain HTCC1062).